Reading from the N-terminus, the 316-residue chain is 1-phosphofructokinase (316 aa).

ATP-binding positions include 225 to 230 and 256 to 257; these read SMGAGG and GD. Asp257 serves as the catalytic Proton acceptor.

It belongs to the carbohydrate kinase PfkB family.

It carries out the reaction beta-D-fructose 1-phosphate + ATP = beta-D-fructose 1,6-bisphosphate + ADP + H(+). Its function is as follows. Catalyzes the ATP-dependent phosphorylation of fructose-l-phosphate to fructose-l,6-bisphosphate. The sequence is that of 1-phosphofructokinase from Rhodobacter capsulatus (Rhodopseudomonas capsulata).